Consider the following 316-residue polypeptide: IDS-like terpene synthase 2 (316 aa).

Mg(2+) contacts are provided by aspartate 69 and aspartate 73.

The protein belongs to the FPP/GGPP synthase family. Requires Mg(2+) as cofactor.

The catalysed reaction is (2E)-geranyl diphosphate + H2O = linalool + diphosphate. The enzyme catalyses (2E,6E)-farnesyl diphosphate + H2O = (6E)-nerolidol + diphosphate. Its function is as follows. Terpene synthase that shows monoterpene synthase activity and produces linalool, using geranyl diphosphate (GPP) as substrate. Also shows sesquiterpene synthase activity as it is able to convert farnesyl diphosphate (FPP) into (E)-nerolidol. In Melampsora larici-populina (strain 98AG31 / pathotype 3-4-7) (Poplar leaf rust fungus), this protein is IDS-like terpene synthase 2.